The following is a 529-amino-acid chain: 3-ketoacyl-CoA synthase 20 (529 aa).

The interval Met-1–Asn-22 is disordered. A run of 2 helical transmembrane segments spans residues Leu-52–Ile-72 and Phe-84–Phe-104. In terms of domain architecture, FAE spans Tyr-103–Val-396. Catalysis depends on residues Cys-247, His-326, His-415, His-419, and Asn-452.

Belongs to the thiolase-like superfamily. Chalcone/stilbene synthases family. As to expression, expressed in aerial organs. Expressed in leaves, flowers, siliques and stems. Expressed in roots, young seedlings, leaves, flowers and siliques.

The protein resides in the membrane. It carries out the reaction a very-long-chain acyl-CoA + malonyl-CoA + H(+) = a very-long-chain 3-oxoacyl-CoA + CO2 + CoA. It participates in lipid metabolism; fatty acid biosynthesis. Inhibited by K3 herbicides such as alachlor, allidochlor, anilofos, cafenstrole, fentrazamide and flufenacet. Strongly inhibited by metazachlor and only slightly by mefluidide. In terms of biological role, mediates the synthesis of VLCFAs from 22 to 26 carbons in length (e.g. C22, C24, C26). Functionally redundant with KCS2 in the two-carbon elongation of C22 fatty acids that is required for cuticular wax and root suberin biosynthesis. The chain is 3-ketoacyl-CoA synthase 20 from Arabidopsis thaliana (Mouse-ear cress).